The following is a 261-amino-acid chain: Probable glutathione-independent glyoxalase hsp3103 (261 aa).

Active-site residues include Cys-162, His-163, and Glu-196.

Belongs to the peptidase C56 family. HSP31-like subfamily.

It catalyses the reaction methylglyoxal + H2O = (R)-lactate + H(+). Its function is as follows. Catalyzes the conversion of methylglyoxal (MG) to D-lactate in a single glutathione (GSH)-independent step. May play a role in detoxifying endogenously produced glyoxals. Involved in protection against reactive oxygen species (ROS). This Schizosaccharomyces pombe (strain 972 / ATCC 24843) (Fission yeast) protein is Probable glutathione-independent glyoxalase hsp3103.